The following is a 488-amino-acid chain: Inosine-5'-monophosphate dehydrogenase (488 aa).

CBS domains are found at residues 95–153 (VISN…SIKI) and 157–216 (MTQE…AKDE). Residues D250 and 300–302 (GIG) each bind NAD(+). Positions 302 and 304 each coordinate K(+). S305 contributes to the IMP binding site. C307 is a binding site for K(+). C307 serves as the catalytic Thioimidate intermediate. Residues 340-342 (DGG), 363-364 (GS), and 387-391 (YRGMG) contribute to the IMP site. Residue R403 is the Proton acceptor of the active site. E417 provides a ligand contact to IMP. A disordered region spans residues 468–488 (GLAESHPHNIQITKESPNYSF). Positions 471, 472, and 473 each coordinate K(+). Positions 475 to 488 (HNIQITKESPNYSF) are enriched in polar residues.

It belongs to the IMPDH/GMPR family. Homotetramer. K(+) serves as cofactor.

The catalysed reaction is IMP + NAD(+) + H2O = XMP + NADH + H(+). It participates in purine metabolism; XMP biosynthesis via de novo pathway; XMP from IMP: step 1/1. Its activity is regulated as follows. Mycophenolic acid (MPA) is a non-competitive inhibitor that prevents formation of the closed enzyme conformation by binding to the same site as the amobile flap. In contrast, mizoribine monophosphate (MZP) is a competitive inhibitor that induces the closed conformation. MPA is a potent inhibitor of mammalian IMPDHs but a poor inhibitor of the bacterial enzymes. MZP is a more potent inhibitor of bacterial IMPDH. Its function is as follows. Catalyzes the conversion of inosine 5'-phosphate (IMP) to xanthosine 5'-phosphate (XMP), the first committed and rate-limiting step in the de novo synthesis of guanine nucleotides, and therefore plays an important role in the regulation of cell growth. The protein is Inosine-5'-monophosphate dehydrogenase of Staphylococcus aureus (strain Mu50 / ATCC 700699).